Reading from the N-terminus, the 348-residue chain is Histidinol-phosphate aminotransferase (348 aa).

The segment at 1 to 31 is disordered; that stretch reads MLPTRDCVRQTPAYTPGEQPQTAGFTKLNTN. Residues 18 to 31 are compositionally biased toward polar residues; that stretch reads EQPQTAGFTKLNTN. Lys-207 is modified (N6-(pyridoxal phosphate)lysine).

This sequence belongs to the class-II pyridoxal-phosphate-dependent aminotransferase family. Histidinol-phosphate aminotransferase subfamily. Homodimer. Requires pyridoxal 5'-phosphate as cofactor.

It catalyses the reaction L-histidinol phosphate + 2-oxoglutarate = 3-(imidazol-4-yl)-2-oxopropyl phosphate + L-glutamate. The protein operates within amino-acid biosynthesis; L-histidine biosynthesis; L-histidine from 5-phospho-alpha-D-ribose 1-diphosphate: step 7/9. The protein is Histidinol-phosphate aminotransferase of Microcystis aeruginosa (strain NIES-843 / IAM M-2473).